Here is a 417-residue protein sequence, read N- to C-terminus: D-amino acid dehydrogenase (417 aa).

FAD is bound at residue 3-17 (VVILGSGVVGVSTAW).

This sequence belongs to the DadA oxidoreductase family. It depends on FAD as a cofactor.

The enzyme catalyses a D-alpha-amino acid + A + H2O = a 2-oxocarboxylate + AH2 + NH4(+). It functions in the pathway amino-acid degradation; D-alanine degradation; NH(3) and pyruvate from D-alanine: step 1/1. Its function is as follows. Oxidative deamination of D-amino acids. The chain is D-amino acid dehydrogenase from Pectobacterium carotovorum subsp. carotovorum (strain PC1).